A 163-amino-acid polypeptide reads, in one-letter code: Pheromone-binding protein (163 aa).

The N-terminal stretch at 1–21 (MLRKISLLLLPVFVAINLVHS) is a signal peptide. 3 disulfides stabilise this stretch: Cys40–Cys75, Cys71–Cys129, and Cys118–Cys138.

Belongs to the PBP/GOBP family. As to quaternary structure, homodimer. As to expression, antenna.

Functionally, this major soluble protein in olfactory sensilla of male moths might serve to solubilize the extremely hydrophobic pheromone molecules and to transport pheromone through the aqueous lymph to receptors located on olfactory cilia. The sequence is that of Pheromone-binding protein from Antheraea polyphemus (Polyphemus moth).